The following is a 100-amino-acid chain: NADH-quinone oxidoreductase subunit K (100 aa).

3 consecutive transmembrane segments (helical) span residues 4 to 24 (LNYG…SLLI), 29 to 49 (IFIL…FILI), and 60 to 80 (VLYI…LAIF).

This sequence belongs to the complex I subunit 4L family. As to quaternary structure, NDH-1 is composed of 13 different subunits. Subunits NuoA, H, J, K, L, M, N constitute the membrane sector of the complex.

It localises to the cell membrane. The catalysed reaction is a quinone + NADH + 5 H(+)(in) = a quinol + NAD(+) + 4 H(+)(out). Its function is as follows. NDH-1 shuttles electrons from NADH, via FMN and iron-sulfur (Fe-S) centers, to quinones in the respiratory chain. The immediate electron acceptor for the enzyme in this species is believed to be ubiquinone. Couples the redox reaction to proton translocation (for every two electrons transferred, four hydrogen ions are translocated across the cytoplasmic membrane), and thus conserves the redox energy in a proton gradient. The sequence is that of NADH-quinone oxidoreductase subunit K from Buchnera aphidicola subsp. Cinara cedri (strain Cc).